A 266-amino-acid chain; its full sequence is Undecaprenyl-diphosphatase (266 aa).

8 helical membrane-spanning segments follow: residues 1-21 (MDTF…FLPI), 39-59 (QGLS…VMYF), 87-107 (WWII…KGFI), 111-131 (LRNI…LWWA), 144-164 (VGWK…IPGT), 183-203 (AAAR…AILV), 218-238 (ALGL…HYFL), and 246-266 (MTPF…FIFL).

The protein belongs to the UppP family.

The protein resides in the cell inner membrane. The catalysed reaction is di-trans,octa-cis-undecaprenyl diphosphate + H2O = di-trans,octa-cis-undecaprenyl phosphate + phosphate + H(+). Its function is as follows. Catalyzes the dephosphorylation of undecaprenyl diphosphate (UPP). Confers resistance to bacitracin. The chain is Undecaprenyl-diphosphatase from Shewanella piezotolerans (strain WP3 / JCM 13877).